Consider the following 221-residue polypeptide: Telomere repeats-binding bouquet formation protein 2 (221 aa).

It belongs to the TERB2 family. In terms of assembly, component of the MAJIN-TERB1-TERB2 complex, composed of MAJIN, TERB1 and TERB2.

The protein resides in the chromosome. It is found in the telomere. Its subcellular location is the nucleus inner membrane. Its function is as follows. Meiosis-specific telomere-associated protein involved in meiotic telomere attachment to the nucleus inner membrane, a crucial step for homologous pairing and synapsis. Component of the MAJIN-TERB1-TERB2 complex, which promotes telomere cap exchange by mediating attachment of telomeric DNA to the inner nuclear membrane and replacement of the protective cap of telomeric chromosomes: in early meiosis, the MAJIN-TERB1-TERB2 complex associates with telomeric DNA and the shelterin/telosome complex. During prophase, the complex matures and promotes release of the shelterin/telosome complex from telomeric DNA. This Bos taurus (Bovine) protein is Telomere repeats-binding bouquet formation protein 2.